A 358-amino-acid polypeptide reads, in one-letter code: MTEHFDARGTRDAQTGRDLHSFIAGLPKAELHVHHVGSASPRIVSELAARHPDSSVPTDPEALADYFTFTDFAHFIKVYLSVVDLIRTPEDVRLLTYEVARELARQQVRYAELTITPFSSTRRGIDERAFMDAIEDARKSAEAEFGTVLRWCFDIPGEAGLESAEETVRLATDDRLRPEGLVSFGLGGPEIGVPRPQFKPYFDRAIAAGLRSVPHAGETTGPETVWDALTDLRAERIGHGTSSAQDPKLLAHLAEHRIPLEVCPTSNIATRAVRTLDEHPVKEFVRAGVVVTINSDDPPMFGTDLNNEYAIAARLLDLDERGLAGLAKNSVEASFLDAAGKARIAAEIDTYTAAWLAP.

H32 and H34 together coordinate Zn(2+). Positions 87, 154, and 188 each coordinate substrate. H215 provides a ligand contact to Zn(2+). E218 acts as the Proton donor in catalysis. Residue D296 participates in Zn(2+) binding.

The protein belongs to the metallo-dependent hydrolases superfamily. Adenosine and AMP deaminases family. Zn(2+) is required as a cofactor.

It catalyses the reaction 6-amino-6-deoxyfutalosine + H2O + H(+) = futalosine + NH4(+). It functions in the pathway quinol/quinone metabolism; menaquinone biosynthesis. Functionally, catalyzes the deamination of aminodeoxyfutalosine (AFL) into futalosine (FL), a step in the biosynthesis of menaquinone (MK, vitamin K2). To a lesser extent, can also deaminate adenosine, 5'-methylthioadenosine, 5'-deoxyadenosine, and 2'-deoxyadenosine. The chain is Aminodeoxyfutalosine deaminase (add2) from Streptomyces avermitilis (strain ATCC 31267 / DSM 46492 / JCM 5070 / NBRC 14893 / NCIMB 12804 / NRRL 8165 / MA-4680).